The sequence spans 263 residues: Pimeloyl-[acyl-carrier protein] methyl ester esterase (263 aa).

Substrate-binding positions include Trp28, 86-87 (SL), and 149-153 (FLAIQ). Ser86 functions as the Nucleophile in the catalytic mechanism. Catalysis depends on residues Asp213 and His240. Substrate is bound at residue His240.

Belongs to the AB hydrolase superfamily. Carboxylesterase BioH family. As to quaternary structure, monomer.

Its subcellular location is the cytoplasm. It catalyses the reaction 6-carboxyhexanoyl-[ACP] methyl ester + H2O = 6-carboxyhexanoyl-[ACP] + methanol + H(+). It functions in the pathway cofactor biosynthesis; biotin biosynthesis. The physiological role of BioH is to remove the methyl group introduced by BioC when the pimeloyl moiety is complete. It allows to synthesize pimeloyl-ACP via the fatty acid synthetic pathway through the hydrolysis of the ester bonds of pimeloyl-ACP esters. The protein is Pimeloyl-[acyl-carrier protein] methyl ester esterase of Shewanella oneidensis (strain ATCC 700550 / JCM 31522 / CIP 106686 / LMG 19005 / NCIMB 14063 / MR-1).